The primary structure comprises 64 residues: Large ribosomal subunit protein uL29 (64 aa).

The protein belongs to the universal ribosomal protein uL29 family.

This Ligilactobacillus salivarius (strain UCC118) (Lactobacillus salivarius) protein is Large ribosomal subunit protein uL29.